Reading from the N-terminus, the 20-residue chain is Truncated non-structural protein of 4.9 kDa (20 aa).

It belongs to the coronaviruses ns4.9 protein family.

The sequence is that of Truncated non-structural protein of 4.9 kDa from Sus scrofa (Pig).